Consider the following 401-residue polypeptide: Riboflavin biosynthesis protein RibBA (401 aa).

Residues 1-203 (MTDFQFSKVE…IQQLQEYRRK (203 aa)) are DHBP synthase. D-ribulose 5-phosphate is bound by residues 30–31 (RE), Asp-35, 142–146 (RNGHT), and Glu-166. Glu-31 serves as a coordination point for Mg(2+). His-145 is a Mg(2+) binding site. The tract at residues 204-401 (HDSLVKQISV…QIKMGHMFNF (198 aa)) is GTP cyclohydrolase II. 254 to 258 (RIHSE) serves as a coordination point for GTP. Positions 259, 270, and 272 each coordinate Zn(2+). GTP contacts are provided by residues Gln-275, 297-299 (EGR), and Thr-319. Asp-331 acts as the Proton acceptor; for GTP cyclohydrolase activity in catalysis. Arg-333 functions as the Nucleophile; for GTP cyclohydrolase activity in the catalytic mechanism. Positions 354 and 359 each coordinate GTP.

The protein in the N-terminal section; belongs to the DHBP synthase family. This sequence in the C-terminal section; belongs to the GTP cyclohydrolase II family. The cofactor is Mg(2+). It depends on Mn(2+) as a cofactor. Requires Zn(2+) as cofactor.

It carries out the reaction D-ribulose 5-phosphate = (2S)-2-hydroxy-3-oxobutyl phosphate + formate + H(+). The catalysed reaction is GTP + 4 H2O = 2,5-diamino-6-hydroxy-4-(5-phosphoribosylamino)-pyrimidine + formate + 2 phosphate + 3 H(+). It functions in the pathway cofactor biosynthesis; riboflavin biosynthesis; 2-hydroxy-3-oxobutyl phosphate from D-ribulose 5-phosphate: step 1/1. Its pathway is cofactor biosynthesis; riboflavin biosynthesis; 5-amino-6-(D-ribitylamino)uracil from GTP: step 1/4. Its function is as follows. Catalyzes the conversion of D-ribulose 5-phosphate to formate and 3,4-dihydroxy-2-butanone 4-phosphate. Functionally, catalyzes the conversion of GTP to 2,5-diamino-6-ribosylamino-4(3H)-pyrimidinone 5'-phosphate (DARP), formate and pyrophosphate. This chain is Riboflavin biosynthesis protein RibBA, found in Actinobacillus pleuropneumoniae serotype 3 (strain JL03).